The following is a 371-amino-acid chain: Beta sliding clamp (371 aa).

Belongs to the beta sliding clamp family. Forms a ring-shaped head-to-tail homodimer around DNA which binds and tethers DNA polymerases and other proteins to the DNA. The DNA replisome complex has a single clamp-loading complex (3 tau and 1 each of delta, delta', psi and chi subunits) which binds 3 Pol III cores (1 core on the leading strand and 2 on the lagging strand) each with a beta sliding clamp dimer. Additional proteins in the replisome are other copies of gamma, psi and chi, Ssb, DNA helicase and RNA primase.

It localises to the cytoplasm. Its function is as follows. Confers DNA tethering and processivity to DNA polymerases and other proteins. Acts as a clamp, forming a ring around DNA (a reaction catalyzed by the clamp-loading complex) which diffuses in an ATP-independent manner freely and bidirectionally along dsDNA. Initially characterized for its ability to contact the catalytic subunit of DNA polymerase III (Pol III), a complex, multichain enzyme responsible for most of the replicative synthesis in bacteria; Pol III exhibits 3'-5' exonuclease proofreading activity. The beta chain is required for initiation of replication as well as for processivity of DNA replication. In Treponema pallidum (strain Nichols), this protein is Beta sliding clamp (dnaN).